A 286-amino-acid chain; its full sequence is MNQSFISDILYADIESKAKELTVNSNNTVQPVALMRLGVFVPKPSKSKGESKEIDATKAFSQLEIAKAEGYDDIKITGPRLDMDTDFKTWIGVIYAFSKYGLSSNTIQLSFQEFAKACGFPSKRLDAKLRLTIHESLGRLRNKGIAFKRGKDAKGGYQTGLLKVGRFDADLDLIELEADSKLWELFQLDYRVLLQHHALRALPKKEAAQAIYTFIESLPQNPLPLSFARIRERLALQSAVGEQNRIIKKAIEQLKTIGYLDCSIEKKGRESFVIVHSRNPKLKLPE.

It belongs to the initiator RepB protein family.

RepA is essential for origin function, autoregulates its own synthesis from the promoter, and, when overproduced, blocks origin function. The protein is Replication protein RepA (repA) of Escherichia coli.